Consider the following 261-residue polypeptide: U11/U12 small nuclear ribonucleoprotein 31 kDa protein (261 aa).

Residues 18–51 form a disordered region; the sequence is YYRYSSVAAPPPSNPKHQPSSSAKSSAPGGGSGG. Residues 57–135 form the RRM domain; the sequence is STLYVSNLDF…RKLTVSIAAD (79 aa). The segment at 153–169 adopts a CCHC-type zinc-finger fold; sequence RCYECGDEGHLSYECPK. Residues 165 to 261 form a disordered region; it reads YECPKNQLGP…YFSDESDDED (97 aa). Positions 226–235 are enriched in basic and acidic residues; sequence AGERLRKREA.

As to quaternary structure, component of the U11/U12 snRNPs that are part of the U12-type spliceosome. In terms of tissue distribution, ubiquitous. Abundantly expressed in the shoot apical neristem.

It localises to the nucleus. Functionally, RNA chaperone required for proper U12 intron splicing and for normal growth and development of plants. Mainly responsible for meristem activity. Plays a role in regulating cell division. This is U11/U12 small nuclear ribonucleoprotein 31 kDa protein (SNRNP31) from Arabidopsis thaliana (Mouse-ear cress).